The sequence spans 645 residues: UvrABC system protein B (645 aa).

The Helicase ATP-binding domain maps to Ala24 to Thr414. Gly37–Thr44 contacts ATP. The Beta-hairpin motif lies at Tyr90 to Ile113. In terms of domain architecture, Helicase C-terminal spans Ala426–Ile591. The 36-residue stretch at Lys610–Leu645 folds into the UVR domain.

Belongs to the UvrB family. Forms a heterotetramer with UvrA during the search for lesions. Interacts with UvrC in an incision complex.

It is found in the cytoplasm. In terms of biological role, the UvrABC repair system catalyzes the recognition and processing of DNA lesions. A damage recognition complex composed of 2 UvrA and 2 UvrB subunits scans DNA for abnormalities. Upon binding of the UvrA(2)B(2) complex to a putative damaged site, the DNA wraps around one UvrB monomer. DNA wrap is dependent on ATP binding by UvrB and probably causes local melting of the DNA helix, facilitating insertion of UvrB beta-hairpin between the DNA strands. Then UvrB probes one DNA strand for the presence of a lesion. If a lesion is found the UvrA subunits dissociate and the UvrB-DNA preincision complex is formed. This complex is subsequently bound by UvrC and the second UvrB is released. If no lesion is found, the DNA wraps around the other UvrB subunit that will check the other stand for damage. The chain is UvrABC system protein B from Wolbachia sp. subsp. Brugia malayi (strain TRS).